The primary structure comprises 479 residues: Leucine-rich repeat-containing protein 74A (479 aa).

The span at 1-10 (MDDDDIEPLE) shows a compositional bias: acidic residues. Residues 1–29 (MDDDDIEPLEYETKDETEAALAPQSSEDT) are disordered. LRR repeat units lie at residues 119–140 (TVLK…SLME), 147–167 (YLQE…RIIS), 176–197 (SLWK…LLCQ), 204–225 (RIRS…YLGQ), 232–253 (GLQS…ALCN), 260–281 (TLKK…ALGD), 288–309 (CLVY…RISK), and 316–336 (CLQV…YSLI).

The protein is Leucine-rich repeat-containing protein 74A of Rattus norvegicus (Rat).